Here is a 328-residue protein sequence, read N- to C-terminus: Malate dehydrogenase (328 aa).

NAD(+) is bound at residue 12–18; it reads GAAGQIG. Positions 92 and 98 each coordinate substrate. NAD(+) is bound by residues N105, Q112, and 129–131; that span reads TGN. Substrate-binding residues include N131 and R162. H187 functions as the Proton acceptor in the catalytic mechanism.

This sequence belongs to the LDH/MDH superfamily. MDH type 2 family.

It carries out the reaction (S)-malate + NAD(+) = oxaloacetate + NADH + H(+). Catalyzes the reversible oxidation of malate to oxaloacetate. The polypeptide is Malate dehydrogenase (Nocardioides sp. (strain ATCC BAA-499 / JS614)).